Reading from the N-terminus, the 638-residue chain is Rik1-associated factor 1 (638 aa).

WD repeat units lie at residues 297–336, 486–525, 544–583, and 587–626; these read KEYS…CGIF, TTQK…KPLS, EVDA…PFIQ, and EMNS…GNKF.

In terms of assembly, component of the Clr4 methyltransferase complex (ClrC) composed of at least clr4, rik1, pcu4, rbx1, raf1 and raf2. The cullin pcu4, rik1, raf1, raf2 and the ring-box protein rbx1 are components of an E3 ubiquitin ligase, whose activity is essential for heterochromatin assembly. Interacts with nup189.

The protein localises to the cytoplasm. It localises to the nucleus. The protein resides in the chromosome. Its function is as follows. Component of the Clr4 methyltransferase complex (ClrC) which contributes to the establishment of heterochromatin by specifically methylating histone H3 to form H3K9me. ClrC preferentially ubiquitylates H3K14 and ClrC-mediated H3 ubiquitination promotes clr4 methyltransferase activity for the methylation of H3K9. H3K9me represents a specific tag for epigenetic transcriptional repression by recruiting swi6/HP1 to methylated histones which leads to transcriptional silencing within centromeric heterochromatin, telomeric regions and at the silent mating-type loci. Has a role in both mitotic and meiotic chromosome segregation. The sequence is that of Rik1-associated factor 1 (raf1) from Schizosaccharomyces pombe (strain 972 / ATCC 24843) (Fission yeast).